We begin with the raw amino-acid sequence, 976 residues long: Chloride channel protein 1 (976 aa).

The Cytoplasmic segment spans residues 1 to 118; it reads MQPSQSLRRG…VVRRKLGEDW (118 aa). Residues 71–92 are disordered; that stretch reads DKEQDTGMSKKMGSSESMDSKD. Positions 77-87 are enriched in low complexity; the sequence is GMSKKMGSSES. Residues 119 to 150 form a helical membrane-spanning segment; that stretch reads IFLVLLGLLMALVSWSMDYVSAKSLQAYKWSY. The Extracellular portion of the chain corresponds to 151-158; the sequence is YQMQPNLP. A helical membrane pass occupies residues 159–179; the sequence is LQYLVWVTFPLTLILFSAVFC. Over 180–183 the chain is Cytoplasmic; that stretch reads HLIS. The segment at residues 184–189 is an intramembrane region (note=Loop between two helices); sequence PQAVGS. The Selectivity filter part_1 signature appears at 188 to 192; that stretch reads GSGIP. Ser-189 contributes to the chloride binding site. Residues 190 to 195 constitute an intramembrane region (helical); the sequence is GIPEMK. Topologically, residues 196–208 are cytoplasmic; that stretch reads TILRGVILKEYLT. Residues 209 to 224 constitute an intramembrane region (helical); it reads LKAFVAKVVALTAGLG. The note=Loop between two helices intramembrane region spans 225–230; it reads SGIPVG. The short motif at 230-234 is the Selectivity filter part_2 element; the sequence is GKEGP. Residues 231-246 constitute an intramembrane region (helical); the sequence is KEGPFVHIASICAAVL. Residues 247–268 lie on the Cytoplasmic side of the membrane; sequence SKFMSMFCGVYEQPYYYTDMLT. 2 consecutive intramembrane regions (helical) follow at residues 269 to 280 and 281 to 290; these read VGCAVGVGCCFG and TPLGGVLFSI. At 291 to 301 the chain is on the cytoplasmic side; the sequence is EVTSTYFAVRN. The helical transmembrane segment at 302–321 threads the bilayer; sequence YWRGFFAATFSAFVFRVLAV. Residues 322 to 347 lie on the Extracellular side of the membrane; sequence WNKDAVTITALFRTNFRMDFPFDLQE. A helical membrane pass occupies residues 348 to 376; that stretch reads LPAFAIIGICCGFLGAVFVYLHRQVMLGV. The Cytoplasmic portion of the chain corresponds to 377 to 390; that stretch reads RKHKALSQFLAKHR. The helical transmembrane segment at 391 to 408 threads the bilayer; the sequence is LLYPGIVTFIIASFTFPP. Topologically, residues 409 to 414 are extracellular; that stretch reads GIGQFM. Residues 415–418 constitute an intramembrane region (note=Loop between two helices); it reads AGEL. Residues 419–426 constitute an intramembrane region (helical); the sequence is MPREAIST. Over 427-457 the chain is Extracellular; the sequence is LFDNNTWVKHVGDPESLGRSAVWIHPRVNVI. The helical intramembrane region spans 458–475; that stretch reads IIIFLFFIMKFWMSIVAT. The segment at residues 476–482 is an intramembrane region (note=Loop between two helices); that stretch reads TMPIPCG. The Selectivity filter part_3 signature appears at 482 to 486; sequence GGFMP. The segment at residues 483–498 is an intramembrane region (helical); the sequence is GFMPVFVLGAAFGRLV. Phe-484 is a chloride binding site. Residues 499 to 521 are Extracellular-facing; it reads GEIMAMLFPDGILFDDIIYKILP. Residues 522 to 538 constitute an intramembrane region (helical); sequence GGYAVIGAAALTGAVSH. The segment at residues 539-540 is an intramembrane region (note=Loop between two helices); sequence TV. Positions 541-554 form an intramembrane region, helical; that stretch reads STAVICFELTGQIA. Topologically, residues 555–557 are extracellular; that stretch reads HIL. The helical intramembrane region spans 558-571; the sequence is PMMVAVILANMVAQ. The note=Loop between two helices intramembrane region spans 572-575; the sequence is SLQP. The segment at residues 576-578 is an intramembrane region (helical); that stretch reads SLY. Tyr-578 provides a ligand contact to chloride. Topologically, residues 579-976 are cytoplasmic; that stretch reads DSIIQVKKLP…DEEDEDELIL (398 aa). The region spanning 609–668 is the CBS 1 domain; it reads MVRDVKFVSATCTYGELRTLLQTTTVKTLPLVDSKDSMILLGSVERSELQSLLQRHLGPE. The interval 707-759 is disordered; it reads DEDEDEDLSGKPELPPLPPPHPLPSAPLSSEESNGPLPSHKQQPEAPEPADQR. Pro residues predominate over residues 719–731; sequence ELPPLPPPHPLPS. The CBS 2 domain maps to 816–871; that stretch reads IDQSPFQLVEQTSLHKTHTLFSLLGLHLAYVTSMGKLRGVLALEELQKAIEGHTKS. The segment at 872–976 is disordered; sequence GVQLRPPLAS…DEEDEDELIL (105 aa). A Phosphoserine modification is found at Ser-881. Residues 914-925 are compositionally biased toward pro residues; it reads SPEPPAPSPSPA. 2 stretches are compositionally biased toward acidic residues: residues 938–955 and 967–976; these read ELEE…EELA and DEEDEDELIL.

It belongs to the chloride channel (TC 2.A.49) family. ClC-1/CLCN1 subfamily. Homodimer.

It is found in the cell membrane. The protein resides in the sarcolemma. It localises to the T-tubule. The catalysed reaction is chloride(in) = chloride(out). It catalyses the reaction thiocyanate(in) = thiocyanate(out). The enzyme catalyses bromide(in) = bromide(out). It carries out the reaction nitrate(in) = nitrate(out). The catalysed reaction is iodide(out) = iodide(in). Its activity is regulated as follows. Modulated by membrane voltage with depolarization favouring channel opening and hyperpolarization favouring channel closure. Inhibited by acidic pH and ATP binding due to a shift of voltage dependence of common gating to more positive voltages. Inhibited by 9-anthracene-carboxylic. Its function is as follows. Voltage-gated chloride channel involved in skeletal muscle excitability. Generates most of the plasma membrane chloride conductance in skeletal muscle fibers, stabilizes the resting membrane potential and contributes to the repolarization phase during action potential firing. Forms a homodimeric channel where each subunit has its own ion conduction pathway. Conducts double-barreled currents controlled by two types of gates, two fast glutamate gates that control each subunit independently and a slow common gate that opens and shuts off both subunits simultaneously. Has a significant open probability at muscle resting potential and is further activated upon membrane depolarization. Permeable to small monovalent anions with ion selectivity for chloride &gt; thiocyanate &gt; bromide &gt; nitrate &gt; iodide. The chain is Chloride channel protein 1 (CLCN1) from Canis lupus familiaris (Dog).